A 263-amino-acid chain; its full sequence is Polyamine aminopropyltransferase (263 aa).

Positions M1–K221 constitute a PABS domain. S-methyl-5'-thioadenosine-binding positions include D98 and D126 to G127. The active-site Proton acceptor is the D144.

The protein belongs to the spermidine/spermine synthase family. As to quaternary structure, homodimer or homotetramer.

The protein localises to the cytoplasm. It carries out the reaction S-adenosyl 3-(methylsulfanyl)propylamine + putrescine = S-methyl-5'-thioadenosine + spermidine + H(+). It participates in amine and polyamine biosynthesis; spermidine biosynthesis; spermidine from putrescine: step 1/1. In terms of biological role, catalyzes the irreversible transfer of a propylamine group from the amino donor S-adenosylmethioninamine (decarboxy-AdoMet) to putrescine (1,4-diaminobutane) to yield spermidine. This chain is Polyamine aminopropyltransferase, found in Neisseria meningitidis serogroup A / serotype 4A (strain DSM 15465 / Z2491).